Consider the following 82-residue polypeptide: Teratocyte protein CftICK-IV (82 aa).

Residues 1-21 form the signal peptide; the sequence is MAKILLTFIILTCLIVTITPA.

Post-translationally, contains 4 disulfide bonds. In terms of tissue distribution, abundantly expressed by teratocytes, which are extra-embryonic cells released by parasitoid wasps into their hosts during larval eclosion.

It is found in the secreted. In terms of biological role, this endoparasitoid wasp peptide has immununosuppressive and insecticidal activities. Suppress cellular immunity which is detectable as a reduction of hemocyte spread index in the host. In vivo, ingestion of this peptide moderately reduces leaf consumption of D.saccharalis, a permissive host for the lepidoptere C.flavipes. The protein is Teratocyte protein CftICK-IV of Cotesia flavipes (Parasitic wasp).